Reading from the N-terminus, the 98-residue chain is Acylphosphatase (98 aa).

The Acylphosphatase-like domain maps to R12 to R98. Active-site residues include R27 and N45.

The protein belongs to the acylphosphatase family.

The enzyme catalyses an acyl phosphate + H2O = a carboxylate + phosphate + H(+). In Mycolicibacterium smegmatis (strain ATCC 700084 / mc(2)155) (Mycobacterium smegmatis), this protein is Acylphosphatase (acyP).